Reading from the N-terminus, the 397-residue chain is Tryptophan synthase beta chain (397 aa).

Lysine 87 carries the N6-(pyridoxal phosphate)lysine modification.

This sequence belongs to the TrpB family. In terms of assembly, tetramer of two alpha and two beta chains. Pyridoxal 5'-phosphate serves as cofactor.

The catalysed reaction is (1S,2R)-1-C-(indol-3-yl)glycerol 3-phosphate + L-serine = D-glyceraldehyde 3-phosphate + L-tryptophan + H2O. It participates in amino-acid biosynthesis; L-tryptophan biosynthesis; L-tryptophan from chorismate: step 5/5. In terms of biological role, the beta subunit is responsible for the synthesis of L-tryptophan from indole and L-serine. The sequence is that of Tryptophan synthase beta chain from Citrobacter koseri (strain ATCC BAA-895 / CDC 4225-83 / SGSC4696).